A 204-amino-acid polypeptide reads, in one-letter code: ATP phosphoribosyltransferase (204 aa).

It belongs to the ATP phosphoribosyltransferase family. Short subfamily. As to quaternary structure, heteromultimer composed of HisG and HisZ subunits.

Its subcellular location is the cytoplasm. It carries out the reaction 1-(5-phospho-beta-D-ribosyl)-ATP + diphosphate = 5-phospho-alpha-D-ribose 1-diphosphate + ATP. It participates in amino-acid biosynthesis; L-histidine biosynthesis; L-histidine from 5-phospho-alpha-D-ribose 1-diphosphate: step 1/9. In terms of biological role, catalyzes the condensation of ATP and 5-phosphoribose 1-diphosphate to form N'-(5'-phosphoribosyl)-ATP (PR-ATP). Has a crucial role in the pathway because the rate of histidine biosynthesis seems to be controlled primarily by regulation of HisG enzymatic activity. The polypeptide is ATP phosphoribosyltransferase (Staphylococcus aureus (strain bovine RF122 / ET3-1)).